We begin with the raw amino-acid sequence, 126 residues long: Activated RNA polymerase II transcriptional coactivator p15 (126 aa).

The tract at residues 1–63 (MPKSKELVSS…QSSNRDENMF (63 aa)) is disordered. The regulatory stretch occupies residues 2–50 (PKSKELVSSSSSASDSDSEVDKKAKRKKQAAPEKPVKKQKTGESSKGAA). The segment covering 7–16 (LVSSSSSASD) has biased composition (low complexity). A compositionally biased stretch (basic and acidic residues) spans 31-44 (AAPEKPVKKQKTGE). The segment covering 45 to 55 (SSKGAASSKQS) has biased composition (low complexity). Residues 76 to 100 (FKGKVLIDIREYWMDQEGEMKPGRK) are interaction with ssDNA.

It belongs to the transcriptional coactivator PC4 family.

The protein resides in the nucleus. In terms of biological role, general coactivator that functions cooperatively with TAFs and mediates functional interactions between upstream activators and the general transcriptional machinery. May be involved in stabilizing the multiprotein transcription complex. Binds single-stranded DNA. Also binds, in vitro, non-specifically to double-stranded DNA (ds DNA). This is Activated RNA polymerase II transcriptional coactivator p15 (SUB1) from Gallus gallus (Chicken).